We begin with the raw amino-acid sequence, 147 residues long: Cyanate hydratase (147 aa).

Catalysis depends on residues arginine 88, glutamate 91, and serine 114.

Belongs to the cyanase family.

It carries out the reaction cyanate + hydrogencarbonate + 3 H(+) = NH4(+) + 2 CO2. Its function is as follows. Catalyzes the reaction of cyanate with bicarbonate to produce ammonia and carbon dioxide. This chain is Cyanate hydratase, found in Albidiferax ferrireducens (strain ATCC BAA-621 / DSM 15236 / T118) (Rhodoferax ferrireducens).